Reading from the N-terminus, the 317-residue chain is 4-hydroxy-3-methylbut-2-enyl diphosphate reductase (317 aa).

Cys-12 lines the [4Fe-4S] cluster pocket. The (2E)-4-hydroxy-3-methylbut-2-enyl diphosphate site is built by His-41 and His-74. 2 residues coordinate dimethylallyl diphosphate: His-41 and His-74. The isopentenyl diphosphate site is built by His-41 and His-74. [4Fe-4S] cluster is bound at residue Cys-97. His-125 is a binding site for (2E)-4-hydroxy-3-methylbut-2-enyl diphosphate. His-125 contributes to the dimethylallyl diphosphate binding site. His-125 serves as a coordination point for isopentenyl diphosphate. Glu-127 acts as the Proton donor in catalysis. Residue Thr-168 coordinates (2E)-4-hydroxy-3-methylbut-2-enyl diphosphate. A [4Fe-4S] cluster-binding site is contributed by Cys-198. Residues Ser-226, Ser-227, Asn-228, and Ser-270 each coordinate (2E)-4-hydroxy-3-methylbut-2-enyl diphosphate. Residues Ser-226, Ser-227, Asn-228, and Ser-270 each contribute to the dimethylallyl diphosphate site. The isopentenyl diphosphate site is built by Ser-226, Ser-227, Asn-228, and Ser-270.

This sequence belongs to the IspH family. As to quaternary structure, homodimer. The cofactor is [4Fe-4S] cluster.

It catalyses the reaction isopentenyl diphosphate + 2 oxidized [2Fe-2S]-[ferredoxin] + H2O = (2E)-4-hydroxy-3-methylbut-2-enyl diphosphate + 2 reduced [2Fe-2S]-[ferredoxin] + 2 H(+). The enzyme catalyses dimethylallyl diphosphate + 2 oxidized [2Fe-2S]-[ferredoxin] + H2O = (2E)-4-hydroxy-3-methylbut-2-enyl diphosphate + 2 reduced [2Fe-2S]-[ferredoxin] + 2 H(+). The protein operates within isoprenoid biosynthesis; dimethylallyl diphosphate biosynthesis; dimethylallyl diphosphate from (2E)-4-hydroxy-3-methylbutenyl diphosphate: step 1/1. It functions in the pathway isoprenoid biosynthesis; isopentenyl diphosphate biosynthesis via DXP pathway; isopentenyl diphosphate from 1-deoxy-D-xylulose 5-phosphate: step 6/6. Functionally, catalyzes the conversion of 1-hydroxy-2-methyl-2-(E)-butenyl 4-diphosphate (HMBPP) into a mixture of isopentenyl diphosphate (IPP) and dimethylallyl diphosphate (DMAPP). Acts in the terminal step of the DOXP/MEP pathway for isoprenoid precursor biosynthesis. The sequence is that of 4-hydroxy-3-methylbut-2-enyl diphosphate reductase from Yersinia pestis bv. Antiqua (strain Antiqua).